The following is a 562-amino-acid chain: Dihydroxy-acid dehydratase 2 (562 aa).

Cys-50 provides a ligand contact to [2Fe-2S] cluster. Asp-82 serves as a coordination point for Mg(2+). Cys-123 contacts [2Fe-2S] cluster. Residues Asp-124, Lys-125, and Glu-447 each coordinate Mg(2+). N6-carboxylysine is present on Lys-125. The Proton acceptor role is filled by Ser-473.

This sequence belongs to the IlvD/Edd family. Homodimer. [2Fe-2S] cluster is required as a cofactor. It depends on Mg(2+) as a cofactor.

The enzyme catalyses (2R)-2,3-dihydroxy-3-methylbutanoate = 3-methyl-2-oxobutanoate + H2O. It carries out the reaction (2R,3R)-2,3-dihydroxy-3-methylpentanoate = (S)-3-methyl-2-oxopentanoate + H2O. It participates in amino-acid biosynthesis; L-isoleucine biosynthesis; L-isoleucine from 2-oxobutanoate: step 3/4. Its pathway is amino-acid biosynthesis; L-valine biosynthesis; L-valine from pyruvate: step 3/4. Functionally, functions in the biosynthesis of branched-chain amino acids. Catalyzes the dehydration of (2R,3R)-2,3-dihydroxy-3-methylpentanoate (2,3-dihydroxy-3-methylvalerate) into 2-oxo-3-methylpentanoate (2-oxo-3-methylvalerate) and of (2R)-2,3-dihydroxy-3-methylbutanoate (2,3-dihydroxyisovalerate) into 2-oxo-3-methylbutanoate (2-oxoisovalerate), the penultimate precursor to L-isoleucine and L-valine, respectively. The sequence is that of Dihydroxy-acid dehydratase 2 from Bordetella pertussis (strain Tohama I / ATCC BAA-589 / NCTC 13251).